Consider the following 502-residue polypeptide: Ubiquitin-associated protein 1 (502 aa).

The interaction with ESCRT-I stretch occupies residues 1–95; the sequence is MASKKLGTDV…AEAKVNSKSG (95 aa). In terms of domain architecture, UMA spans 17 to 63; that stretch reads LDDVPFKIGDKFKTPAKVGLPIGFSLPDCLQVVREMQYDFSLEKKTI. The segment covering 80–100 has biased composition (basic and acidic residues); that stretch reads ERKAEEAEAKVNSKSGPEGDS. Disordered stretches follow at residues 80–117 and 135–156; these read ERKA…PPPI and VSSS…DFNP. Phosphoserine occurs at positions 146, 205, and 289. The interval 260 to 290 is interaction with PTPN23; the sequence is VSNIKSLSFPKLDSDDSNQKTVKLASTFHST. 2 UBA domains span residues 389–430 and 451–498; these read SPSE…LFAH and QCSE…LMAR.

Component of an ESCRT-I complex (endosomal sorting complex required for transport I) which consists of TSG101, VPS28, VPS37A and UBAP1 in a 1:1:1:1 stoichiometry. Interacts with PTPN23. Interacts (via UBA domains) with ubiquitinated proteins. As to expression, ubiquitous. Highly expressed in heart, liver, brain, kidney, spleen, skeletal muscle, stomach, testis and lung.

Its subcellular location is the cytoplasm. The protein resides in the cytosol. The protein localises to the endosome. Its function is as follows. Component of the ESCRT-I complex, a regulator of vesicular trafficking process. Binds to ubiquitinated cargo proteins and is required for the sorting of endocytic ubiquitinated cargos into multivesicular bodies (MVBs). Plays a role in the proteasomal degradation of ubiquitinated cell-surface proteins, such as EGFR and BST2. This chain is Ubiquitin-associated protein 1, found in Mus musculus (Mouse).